The following is a 202-amino-acid chain: Na(+)-translocating NADH-quinone reductase subunit E (202 aa).

6 consecutive transmembrane segments (helical) span residues 4–24, 35–55, 81–101, 114–134, 144–164, and 180–200; these read LAGL…FFLG, IEVA…TVPI, FLGL…LEMF, GIYL…LFMV, LVYG…LAGV, and LGIT…FSGI.

Belongs to the NqrDE/RnfAE family. As to quaternary structure, composed of six subunits; NqrA, NqrB, NqrC, NqrD, NqrE and NqrF.

The protein localises to the cell inner membrane. The catalysed reaction is a ubiquinone + n Na(+)(in) + NADH + H(+) = a ubiquinol + n Na(+)(out) + NAD(+). Its function is as follows. NQR complex catalyzes the reduction of ubiquinone-1 to ubiquinol by two successive reactions, coupled with the transport of Na(+) ions from the cytoplasm to the periplasm. NqrA to NqrE are probably involved in the second step, the conversion of ubisemiquinone to ubiquinol. The sequence is that of Na(+)-translocating NADH-quinone reductase subunit E from Nitrosomonas europaea (strain ATCC 19718 / CIP 103999 / KCTC 2705 / NBRC 14298).